The following is a 264-amino-acid chain: S-adenosylmethionine decarboxylase proenzyme (264 aa).

Ser-112 serves as the catalytic Schiff-base intermediate with substrate; via pyruvic acid. A Pyruvic acid (Ser); by autocatalysis modification is found at Ser-112. His-117 functions as the Proton acceptor; for processing activity in the catalytic mechanism. Cys-140 functions as the Proton donor; for catalytic activity in the catalytic mechanism.

Belongs to the prokaryotic AdoMetDC family. Type 2 subfamily. In terms of assembly, heterooctamer of four alpha and four beta chains arranged as a tetramer of alpha/beta heterodimers. It depends on pyruvate as a cofactor. Is synthesized initially as an inactive proenzyme. Formation of the active enzyme involves a self-maturation process in which the active site pyruvoyl group is generated from an internal serine residue via an autocatalytic post-translational modification. Two non-identical subunits are generated from the proenzyme in this reaction, and the pyruvate is formed at the N-terminus of the alpha chain, which is derived from the carboxyl end of the proenzyme. The post-translation cleavage follows an unusual pathway, termed non-hydrolytic serinolysis, in which the side chain hydroxyl group of the serine supplies its oxygen atom to form the C-terminus of the beta chain, while the remainder of the serine residue undergoes an oxidative deamination to produce ammonia and the pyruvoyl group blocking the N-terminus of the alpha chain.

The enzyme catalyses S-adenosyl-L-methionine + H(+) = S-adenosyl 3-(methylsulfanyl)propylamine + CO2. The protein operates within amine and polyamine biosynthesis; S-adenosylmethioninamine biosynthesis; S-adenosylmethioninamine from S-adenosyl-L-methionine: step 1/1. Its function is as follows. Catalyzes the decarboxylation of S-adenosylmethionine to S-adenosylmethioninamine (dcAdoMet), the propylamine donor required for the synthesis of the polyamines spermine and spermidine from the diamine putrescine. The sequence is that of S-adenosylmethionine decarboxylase proenzyme from Salmonella typhi.